The following is a 174-amino-acid chain: FMN-dependent NADPH-azoreductase (174 aa).

FMN-binding positions include 9–11, 15–16, 73–76, and glycine 106; these read TPR, RT, and EYHS.

Belongs to the azoreductase type 2 family. Homotetramer. It depends on FMN as a cofactor.

Its function is as follows. Catalyzes the reductive cleavage of azo bond in aromatic azo compounds to the corresponding amines. Requires NADPH, but not NADH, as an electron donor for its activity. The protein is FMN-dependent NADPH-azoreductase (azr) of Bacillus subtilis (strain 168).